A 357-amino-acid chain; its full sequence is Probable RNA methyltransferase Daro_1157 (357 aa).

Residue Glu-91 is the Proton acceptor of the active site. Residues 94–320 (LLPRDGLCIS…TTVRNSAGQD (227 aa)) form the Radical SAM core domain. A disulfide bond links Cys-101 and Cys-325. The [4Fe-4S] cluster site is built by Cys-108, Cys-112, and Cys-115. S-adenosyl-L-methionine is bound by residues 153 to 154 (GE), Ser-183, 206 to 208 (SLH), and Asn-282. Catalysis depends on Cys-325, which acts as the S-methylcysteine intermediate.

The protein belongs to the radical SAM superfamily. RlmN family. The cofactor is [4Fe-4S] cluster.

The protein resides in the cytoplasm. This chain is Probable RNA methyltransferase Daro_1157, found in Dechloromonas aromatica (strain RCB).